We begin with the raw amino-acid sequence, 301 residues long: Acetyl-coenzyme A carboxylase carboxyl transferase subunit beta (301 aa).

A CoA carboxyltransferase N-terminal domain is found at 25–294 (LWIKDPSTGE…NSDAPEHEKT (270 aa)). The segment at 282-301 (QPGNSDAPEHEKTEATDKAA) is disordered. The span at 288–301 (APEHEKTEATDKAA) shows a compositional bias: basic and acidic residues.

The protein belongs to the AccD/PCCB family. As to quaternary structure, acetyl-CoA carboxylase is a heterohexamer composed of biotin carboxyl carrier protein (AccB), biotin carboxylase (AccC) and two subunits each of ACCase subunit alpha (AccA) and ACCase subunit beta (AccD).

It localises to the cytoplasm. It catalyses the reaction N(6)-carboxybiotinyl-L-lysyl-[protein] + acetyl-CoA = N(6)-biotinyl-L-lysyl-[protein] + malonyl-CoA. The protein operates within lipid metabolism; malonyl-CoA biosynthesis; malonyl-CoA from acetyl-CoA: step 1/1. Its function is as follows. Component of the acetyl coenzyme A carboxylase (ACC) complex. Biotin carboxylase (BC) catalyzes the carboxylation of biotin on its carrier protein (BCCP) and then the CO(2) group is transferred by the transcarboxylase to acetyl-CoA to form malonyl-CoA. The protein is Acetyl-coenzyme A carboxylase carboxyl transferase subunit beta of Brucella anthropi (strain ATCC 49188 / DSM 6882 / CCUG 24695 / JCM 21032 / LMG 3331 / NBRC 15819 / NCTC 12168 / Alc 37) (Ochrobactrum anthropi).